The primary structure comprises 361 residues: Phosphoserine aminotransferase (361 aa).

Arg-43 contributes to the L-glutamate binding site. Pyridoxal 5'-phosphate is bound by residues 77-78, Trp-103, Thr-153, Asp-173, and Gln-196; that span reads AS. At Lys-197 the chain carries N6-(pyridoxal phosphate)lysine. Position 238 to 239 (238 to 239) interacts with pyridoxal 5'-phosphate; the sequence is NT.

Belongs to the class-V pyridoxal-phosphate-dependent aminotransferase family. SerC subfamily. In terms of assembly, homodimer. It depends on pyridoxal 5'-phosphate as a cofactor.

The protein localises to the cytoplasm. It carries out the reaction O-phospho-L-serine + 2-oxoglutarate = 3-phosphooxypyruvate + L-glutamate. It catalyses the reaction 4-(phosphooxy)-L-threonine + 2-oxoglutarate = (R)-3-hydroxy-2-oxo-4-phosphooxybutanoate + L-glutamate. It functions in the pathway amino-acid biosynthesis; L-serine biosynthesis; L-serine from 3-phospho-D-glycerate: step 2/3. Its pathway is cofactor biosynthesis; pyridoxine 5'-phosphate biosynthesis; pyridoxine 5'-phosphate from D-erythrose 4-phosphate: step 3/5. Functionally, catalyzes the reversible conversion of 3-phosphohydroxypyruvate to phosphoserine and of 3-hydroxy-2-oxo-4-phosphonooxybutanoate to phosphohydroxythreonine. In Stutzerimonas stutzeri (Pseudomonas stutzeri), this protein is Phosphoserine aminotransferase.